The chain runs to 309 residues: uncharacterized protein (309 aa).

Residues 23–39 (RFNVAIIGGTGGLGRAI) traverse the membrane as a helical segment.

This sequence belongs to the NmrA-type oxidoreductase family.

It is found in the membrane. This is an uncharacterized protein from Saccharomyces cerevisiae (strain ATCC 204508 / S288c) (Baker's yeast).